Consider the following 249-residue polypeptide: Probable transcriptional regulatory protein FN1661 (249 aa).

Polar residues predominate over residues 1–10; it reads MSGHSKWNNI. A disordered region spans residues 1–20; the sequence is MSGHSKWNNIQHRKGAQDKK.

The protein belongs to the TACO1 family.

It is found in the cytoplasm. The chain is Probable transcriptional regulatory protein FN1661 from Fusobacterium nucleatum subsp. nucleatum (strain ATCC 25586 / DSM 15643 / BCRC 10681 / CIP 101130 / JCM 8532 / KCTC 2640 / LMG 13131 / VPI 4355).